The sequence spans 73 residues: Large ribosomal subunit protein bL31 (73 aa).

Positions 16, 18, 38, and 41 each coordinate Zn(2+).

Belongs to the bacterial ribosomal protein bL31 family. Type A subfamily. In terms of assembly, part of the 50S ribosomal subunit. Zn(2+) is required as a cofactor.

In terms of biological role, binds the 23S rRNA. In Vibrio vulnificus (strain YJ016), this protein is Large ribosomal subunit protein bL31.